Consider the following 156-residue polypeptide: MKLLVLRLILIISTIFVLLNLSCMVNGLSLKRKSIVSDHWVNVANSIDGKTLTYNTIANKVDFLQFRVDREDESRILNDMYINVTSVKAARFGIFFNNFNPANSSNDSRGRAGYCPIWFATCGAETPYFSLGSNNSYTSDLTFTVTVRDEIKLCDF.

Positions 1–27 are cleaved as a signal peptide; it reads MKLLVLRLILIISTIFVLLNLSCMVNG. Asn-20, Asn-83, Asn-103, Asn-106, and Asn-134 each carry an N-linked (GlcNAc...) asparagine glycan.

Its subcellular location is the secreted. This is an uncharacterized protein from Dictyostelium discoideum (Social amoeba).